Consider the following 255-residue polypeptide: Glutamate racemase (255 aa).

Residues Asp7–Ser8 and Tyr39–Gly40 each bind substrate. Cys70 serves as the catalytic Proton donor/acceptor. Asn71 to Thr72 contributes to the substrate binding site. Cys181 functions as the Proton donor/acceptor in the catalytic mechanism. Thr182 to His183 serves as a coordination point for substrate.

It belongs to the aspartate/glutamate racemases family.

It carries out the reaction L-glutamate = D-glutamate. Its pathway is cell wall biogenesis; peptidoglycan biosynthesis. Functionally, provides the (R)-glutamate required for cell wall biosynthesis. This chain is Glutamate racemase, found in Helicobacter pylori (strain G27).